Here is a 355-residue protein sequence, read N- to C-terminus: Glutamine synthetase root isozyme 4 (355 aa).

Positions 19–99 constitute a GS beta-grasp domain; the sequence is IIAEYIWIGG…VMCDCYTPAG (81 aa). The interval 37-66 is disordered; it reads ARTLPGPVTDPSKLPKWNYDGSSTGQAPGE. The GS catalytic domain maps to 106-355; sequence KRYSAAKIFS…IAETTIVWKP (250 aa).

It belongs to the glutamine synthetase family. In terms of assembly, homooctamer. As to expression, found in all the tissues examined with higher expression found in tissues of the root, stem and seedling shoot.

Its subcellular location is the cytoplasm. It catalyses the reaction L-glutamate + NH4(+) + ATP = L-glutamine + ADP + phosphate + H(+). Plays a role in the flow of nitrogen into nitrogenous organic compounds. In Zea mays (Maize), this protein is Glutamine synthetase root isozyme 4 (GLN5).